A 527-amino-acid chain; its full sequence is Probable protein kinase UbiB (527 aa).

Residues 123–527 (EFNETALASA…AIWLLIYLLS (405 aa)) enclose the Protein kinase domain. ATP-binding positions include 129-137 (LASASIAQV) and K161. Residue D296 is the Proton acceptor of the active site. Residues 506 to 526 (FTSFILGLCTGLAIWLLIYLL) form a helical membrane-spanning segment.

Belongs to the ABC1 family. UbiB subfamily.

It localises to the cell inner membrane. It functions in the pathway cofactor biosynthesis; ubiquinone biosynthesis [regulation]. Functionally, is probably a protein kinase regulator of UbiI activity which is involved in aerobic coenzyme Q (ubiquinone) biosynthesis. The sequence is that of Probable protein kinase UbiB from Pasteurella multocida (strain Pm70).